Reading from the N-terminus, the 450-residue chain is Bifunctional protein GlmU (450 aa).

The interval 1–229 is pyrophosphorylase; the sequence is MRRHAIILAA…VEEIMGVNDR (229 aa). Residues 8–11, Lys22, Gln72, and 77–78 contribute to the UDP-N-acetyl-alpha-D-glucosamine site; these read LAAG and GT. A Mg(2+)-binding site is contributed by Asp102. Residues Gly139, Glu154, and Asn227 each coordinate UDP-N-acetyl-alpha-D-glucosamine. A Mg(2+)-binding site is contributed by Asn227. Residues 230–250 form a linker region; the sequence is VMLSQAEKAMQRRTNHYHMLN. The segment at 251-450 is N-acetyltransferase; sequence GVTIIDPDST…RQTTKEGYRK (200 aa). Residues Arg332 and Lys350 each coordinate UDP-N-acetyl-alpha-D-glucosamine. His362 (proton acceptor) is an active-site residue. Residues Tyr365 and Asn376 each contribute to the UDP-N-acetyl-alpha-D-glucosamine site. Residues 385-386, Ala422, and Arg439 each bind acetyl-CoA; that span reads NY.

It in the N-terminal section; belongs to the N-acetylglucosamine-1-phosphate uridyltransferase family. The protein in the C-terminal section; belongs to the transferase hexapeptide repeat family. In terms of assembly, homotrimer. Requires Mg(2+) as cofactor.

The protein localises to the cytoplasm. It carries out the reaction alpha-D-glucosamine 1-phosphate + acetyl-CoA = N-acetyl-alpha-D-glucosamine 1-phosphate + CoA + H(+). It catalyses the reaction N-acetyl-alpha-D-glucosamine 1-phosphate + UTP + H(+) = UDP-N-acetyl-alpha-D-glucosamine + diphosphate. It functions in the pathway nucleotide-sugar biosynthesis; UDP-N-acetyl-alpha-D-glucosamine biosynthesis; N-acetyl-alpha-D-glucosamine 1-phosphate from alpha-D-glucosamine 6-phosphate (route II): step 2/2. Its pathway is nucleotide-sugar biosynthesis; UDP-N-acetyl-alpha-D-glucosamine biosynthesis; UDP-N-acetyl-alpha-D-glucosamine from N-acetyl-alpha-D-glucosamine 1-phosphate: step 1/1. It participates in bacterial outer membrane biogenesis; LPS lipid A biosynthesis. Functionally, catalyzes the last two sequential reactions in the de novo biosynthetic pathway for UDP-N-acetylglucosamine (UDP-GlcNAc). The C-terminal domain catalyzes the transfer of acetyl group from acetyl coenzyme A to glucosamine-1-phosphate (GlcN-1-P) to produce N-acetylglucosamine-1-phosphate (GlcNAc-1-P), which is converted into UDP-GlcNAc by the transfer of uridine 5-monophosphate (from uridine 5-triphosphate), a reaction catalyzed by the N-terminal domain. The chain is Bifunctional protein GlmU from Staphylococcus aureus (strain NCTC 8325 / PS 47).